The sequence spans 106 residues: uncharacterized protein (106 aa).

It to the N-terminal of E.carotovora exoenzyme regulation regulon ORF1. The C-terminal part is colinear with YqcB. This sequence to E.coli YqcC.

This is an uncharacterized protein from Haemophilus influenzae (strain ATCC 51907 / DSM 11121 / KW20 / Rd).